The sequence spans 312 residues: Epoxyqueuosine reductase (312 aa).

Catalysis depends on aspartate 132, which acts as the Proton donor. A 4Fe-4S ferredoxin-type 1 domain is found at 174–206 (EVLEADKPSKPICGECEKCIEACPTKAIEEPFI). Cysteine 186, cysteine 189, cysteine 192, cysteine 196, cysteine 212, cysteine 240, cysteine 243, and cysteine 247 together coordinate [4Fe-4S] cluster. A 4Fe-4S ferredoxin-type 2 domain is found at 226–257 (PENIINKMGNWIAGCDICQDVCPWNQKHIPST).

This sequence belongs to the QueG family. As to quaternary structure, monomer. Cob(II)alamin is required as a cofactor. It depends on [4Fe-4S] cluster as a cofactor.

Its subcellular location is the cytoplasm. It catalyses the reaction epoxyqueuosine(34) in tRNA + AH2 = queuosine(34) in tRNA + A + H2O. The protein operates within tRNA modification; tRNA-queuosine biosynthesis. Functionally, catalyzes the conversion of epoxyqueuosine (oQ) to queuosine (Q), which is a hypermodified base found in the wobble positions of tRNA(Asp), tRNA(Asn), tRNA(His) and tRNA(Tyr). The chain is Epoxyqueuosine reductase from Prochlorococcus marinus (strain NATL2A).